The sequence spans 155 residues: Peptide deformylase (155 aa).

Residues Cys88 and His130 each coordinate Fe cation. Glu131 is an active-site residue. Fe cation is bound at residue His134.

The protein belongs to the polypeptide deformylase family. Requires Fe(2+) as cofactor.

It catalyses the reaction N-terminal N-formyl-L-methionyl-[peptide] + H2O = N-terminal L-methionyl-[peptide] + formate. In terms of biological role, removes the formyl group from the N-terminal Met of newly synthesized proteins. Requires at least a dipeptide for an efficient rate of reaction. N-terminal L-methionine is a prerequisite for activity but the enzyme has broad specificity at other positions. In Pelotomaculum thermopropionicum (strain DSM 13744 / JCM 10971 / SI), this protein is Peptide deformylase.